The sequence spans 623 residues: Chaperone protein HtpG (623 aa).

The segment at 1 to 326 is a; substrate-binding; sequence MAEEKRQFQA…SQDLPLNVSR (326 aa). Residues 327–543 form a b region; sequence EMLQHNPVLS…EGEMSMHLEK (217 aa). The interval 544 to 623 is c; it reads MLRAHNQAPG…VSVMEKGLLG (80 aa).

It belongs to the heat shock protein 90 family. Homodimer.

Its subcellular location is the cytoplasm. In terms of biological role, molecular chaperone. Has ATPase activity. The polypeptide is Chaperone protein HtpG (Paramagnetospirillum magneticum (strain ATCC 700264 / AMB-1) (Magnetospirillum magneticum)).